We begin with the raw amino-acid sequence, 118 residues long: Large ribosomal subunit protein uL18 (118 aa).

Residues 1-20 (MISKPDKNKKRQRRHARVRS) form a disordered region. Residues 7-20 (KNKKRQRRHARVRS) show a composition bias toward basic residues.

This sequence belongs to the universal ribosomal protein uL18 family. In terms of assembly, part of the 50S ribosomal subunit; part of the 5S rRNA/L5/L18/L25 subcomplex. Contacts the 5S and 23S rRNAs.

In terms of biological role, this is one of the proteins that bind and probably mediate the attachment of the 5S RNA into the large ribosomal subunit, where it forms part of the central protuberance. This Pediococcus pentosaceus (strain ATCC 25745 / CCUG 21536 / LMG 10740 / 183-1w) protein is Large ribosomal subunit protein uL18.